Reading from the N-terminus, the 223-residue chain is MGFDFNYMLELLPILLKYLGTTMEMATWGLVFSLILSVILANIRVFKLPVLDQLSQLYISFFRGTPLLVQLFLLYYGLPQIFPFMVGIDAFSAAVIGLTLHFAAYMAESIRAAIIGIDRSQMEASLSVGMTTTQAMRRVILPQATRVALPSLMNYFIDMIKSTSLAFTLGVAEIMAKAQMEASSSFRFFEAFLAVALIYWGVVVILTRVQIWAEAKLNKAYVR.

The ABC transmembrane type-1 domain occupies 19–210 (LGTTMEMATW…GVVVILTRVQ (192 aa)). 5 helical membrane-spanning segments follow: residues 23–43 (MEMATWGLVFSLILSVILANI), 59–78 (ISFFRGTPLLVQLFLLYYGL), 90–110 (AFSAAVIGLTLHFAAYMAESI), 156–176 (FIDMIKSTSLAFTLGVAEIMA), and 186–206 (FRFFEAFLAVALIYWGVVVIL).

The protein belongs to the binding-protein-dependent transport system permease family. HisMQ subfamily.

It is found in the cell inner membrane. Functionally, probably part of a binding-protein-dependent transport system for an amino acid. Probably responsible for the translocation of the substrate across the membrane. The polypeptide is Probable amino-acid ABC transporter permease protein PatM (patM) (Vibrio harveyi (Beneckea harveyi)).